Here is a 119-residue protein sequence, read N- to C-terminus: Urease subunit beta (119 aa).

It belongs to the urease beta subunit family. In terms of assembly, heterotrimer of UreA (gamma), UreB (beta) and UreC (alpha) subunits. Three heterotrimers associate to form the active enzyme.

It is found in the cytoplasm. It catalyses the reaction urea + 2 H2O + H(+) = hydrogencarbonate + 2 NH4(+). It participates in nitrogen metabolism; urea degradation; CO(2) and NH(3) from urea (urease route): step 1/1. This is Urease subunit beta from Tolumonas auensis (strain DSM 9187 / NBRC 110442 / TA 4).